The sequence spans 709 residues: Myotubularin-related protein 11 (709 aa).

The tract at residues 1 to 39 is disordered; it reads MWWGGRGQSFNIAPQKEEPEMGSVQENRMPEPRSRQPSS. Residues 196–639 enclose the Myotubularin phosphatase domain; that stretch reads METAEDWETE…PQIRLWRRCY (444 aa).

It belongs to the protein-tyrosine phosphatase family. Non-receptor class myotubularin subfamily. In terms of tissue distribution, expressed in bone marrow, spleen and thymus.

This Homo sapiens (Human) protein is Myotubularin-related protein 11 (MTMR11).